The sequence spans 596 residues: Pentatricopeptide repeat-containing protein At1g50270 (596 aa).

PPR repeat units follow at residues 66-102 (SIQL…GVIP), 103-136 (SRHT…GLDS), 137-167 (DPFV…AEDK), 168-202 (DVVT…GVAA), 203-237 (NEMT…GRVK), 239-269 (DVFI…MPSR), 270-304 (NVVT…DVAP), 305-339 (NEKT…SIEI), 340-370 (NTTA…LHEK), 371-405 (NVYT…HVSP), 406-436 (NEVT…MKGR), and 442-472 (KADH…MPME). Positions 477–552 (VWGALFGSCL…SPGFSWIEVK (76 aa)) are type E motif. A type E(+) motif region spans residues 553–584 (GKLCEFIAFDDKKPLESDDLYKTLDTVGVQMR).

It belongs to the PPR family. PCMP-E subfamily.

The sequence is that of Pentatricopeptide repeat-containing protein At1g50270 (PCMP-E42) from Arabidopsis thaliana (Mouse-ear cress).